The chain runs to 327 residues: Glycerol-3-phosphate acyltransferase (327 aa).

5 consecutive transmembrane segments (helical) span residues 3 to 23, 52 to 72, 78 to 98, 112 to 132, and 152 to 172; these read SLLW…LLFA, VGVL…AVAL, TVFH…SCFL, VFLP…LAVI, and MLLL…MVLV. Disordered regions lie at residues 184 to 212 and 233 to 327; these read SRGE…EAAA and PSTE…SSGQ. A compositionally biased stretch (low complexity) spans 199–212; sequence AQGTDAGAAPEAAA. Residues 237–246 show a composition bias toward polar residues; that stretch reads AAPSQETSDA. The span at 259–271 shows a compositional bias: basic and acidic residues; it reads EGDKRENEEHDNA.

It belongs to the PlsY family. As to quaternary structure, probably interacts with PlsX.

It localises to the cell inner membrane. The enzyme catalyses an acyl phosphate + sn-glycerol 3-phosphate = a 1-acyl-sn-glycero-3-phosphate + phosphate. Its pathway is lipid metabolism; phospholipid metabolism. Catalyzes the transfer of an acyl group from acyl-phosphate (acyl-PO(4)) to glycerol-3-phosphate (G3P) to form lysophosphatidic acid (LPA). This enzyme utilizes acyl-phosphate as fatty acyl donor, but not acyl-CoA or acyl-ACP. This Nitratidesulfovibrio vulgaris (strain ATCC 29579 / DSM 644 / CCUG 34227 / NCIMB 8303 / VKM B-1760 / Hildenborough) (Desulfovibrio vulgaris) protein is Glycerol-3-phosphate acyltransferase.